A 61-amino-acid polypeptide reads, in one-letter code: MLNIFSLISICLNSALYSSSFFFGKLPEAYAFLNPIVDVMPVIPVFFFLLAFVWQAAVSFR.

Positions 1–24 are excised as a propeptide; the sequence is MLNIFSLISICLNSALYSSSFFFG. Residues 40–60 traverse the membrane as a helical segment; that stretch reads MPVIPVFFFLLAFVWQAAVSF.

Belongs to the PsbK family. As to quaternary structure, PSII is composed of 1 copy each of membrane proteins PsbA, PsbB, PsbC, PsbD, PsbE, PsbF, PsbH, PsbI, PsbJ, PsbK, PsbL, PsbM, PsbT, PsbX, PsbY, PsbZ, Psb30/Ycf12, at least 3 peripheral proteins of the oxygen-evolving complex and a large number of cofactors. It forms dimeric complexes.

It localises to the plastid. The protein resides in the chloroplast thylakoid membrane. Functionally, one of the components of the core complex of photosystem II (PSII). PSII is a light-driven water:plastoquinone oxidoreductase that uses light energy to abstract electrons from H(2)O, generating O(2) and a proton gradient subsequently used for ATP formation. It consists of a core antenna complex that captures photons, and an electron transfer chain that converts photonic excitation into a charge separation. The sequence is that of Photosystem II reaction center protein K from Jasminum nudiflorum (Winter jasmine).